The sequence spans 127 residues: Glycine cleavage system H protein (127 aa).

The 83-residue stretch at 22 to 104 (KVRIGITDFA…YEKAWMIVVE (83 aa)) folds into the Lipoyl-binding domain. K63 is modified (N6-lipoyllysine).

Belongs to the GcvH family. As to quaternary structure, the glycine cleavage system is composed of four proteins: P, T, L and H. (R)-lipoate serves as cofactor.

Functionally, the glycine cleavage system catalyzes the degradation of glycine. The H protein shuttles the methylamine group of glycine from the P protein to the T protein. Its function is as follows. Is also involved in protein lipoylation via its role as an octanoyl/lipoyl carrier protein intermediate. This Geobacillus sp. (strain WCH70) protein is Glycine cleavage system H protein.